We begin with the raw amino-acid sequence, 318 residues long: Small ribosomal subunit biogenesis GTPase RsgA (318 aa).

Positions 82 to 246 (RQDEIRTKSF…LIDSPGFQEF (165 aa)) constitute a CP-type G domain. GTP contacts are provided by residues 132-135 (NKSD) and 186-194 (GPSGAGKST). 4 residues coordinate Zn(2+): Cys270, Cys275, His277, and Cys283.

Belongs to the TRAFAC class YlqF/YawG GTPase family. RsgA subfamily. In terms of assembly, monomer. Associates with 30S ribosomal subunit, binds 16S rRNA. Requires Zn(2+) as cofactor.

It is found in the cytoplasm. Functionally, one of several proteins that assist in the late maturation steps of the functional core of the 30S ribosomal subunit. Helps release RbfA from mature subunits. May play a role in the assembly of ribosomal proteins into the subunit. Circularly permuted GTPase that catalyzes slow GTP hydrolysis, GTPase activity is stimulated by the 30S ribosomal subunit. This chain is Small ribosomal subunit biogenesis GTPase RsgA, found in Variovorax paradoxus (strain S110).